Reading from the N-terminus, the 292-residue chain is UDP-N-acetylenolpyruvoylglucosamine reductase (292 aa).

Residues 21 to 186 (QAGGLVDYLA…ISATFELQPD (166 aa)) form the FAD-binding PCMH-type domain. Residue Arg-165 is part of the active site. Ser-215 (proton donor) is an active-site residue. Glu-285 is an active-site residue.

This sequence belongs to the MurB family. FAD is required as a cofactor.

The protein resides in the cytoplasm. It catalyses the reaction UDP-N-acetyl-alpha-D-muramate + NADP(+) = UDP-N-acetyl-3-O-(1-carboxyvinyl)-alpha-D-glucosamine + NADPH + H(+). The protein operates within cell wall biogenesis; peptidoglycan biosynthesis. Cell wall formation. The protein is UDP-N-acetylenolpyruvoylglucosamine reductase of Leuconostoc mesenteroides subsp. mesenteroides (strain ATCC 8293 / DSM 20343 / BCRC 11652 / CCM 1803 / JCM 6124 / NCDO 523 / NBRC 100496 / NCIMB 8023 / NCTC 12954 / NRRL B-1118 / 37Y).